The chain runs to 493 residues: Cysteine--tRNA ligase (493 aa).

Residue cysteine 41 participates in Zn(2+) binding. Residues 43-53 (PTVYNYPHIGN) carry the 'HIGH' region motif. Zn(2+) is bound by residues cysteine 231, histidine 256, and glutamate 260. The 'KMSKS' region motif lies at 296–300 (KMSKS). Lysine 299 lines the ATP pocket.

It belongs to the class-I aminoacyl-tRNA synthetase family. As to quaternary structure, monomer. Requires Zn(2+) as cofactor.

The protein localises to the cytoplasm. The catalysed reaction is tRNA(Cys) + L-cysteine + ATP = L-cysteinyl-tRNA(Cys) + AMP + diphosphate. The sequence is that of Cysteine--tRNA ligase from Novosphingobium aromaticivorans (strain ATCC 700278 / DSM 12444 / CCUG 56034 / CIP 105152 / NBRC 16084 / F199).